A 388-amino-acid polypeptide reads, in one-letter code: Succinate--CoA ligase [ADP-forming] subunit beta (388 aa).

The 236-residue stretch at 9–244 (KQLFKEFGLP…PSQDDAREAE (236 aa)) folds into the ATP-grasp domain. ATP contacts are provided by residues Lys46, 53 to 55 (GRG), Glu99, Thr102, and Glu107. Positions 199 and 213 each coordinate Mg(2+). Substrate is bound by residues Asn264 and 321–323 (GIV).

This sequence belongs to the succinate/malate CoA ligase beta subunit family. As to quaternary structure, heterotetramer of two alpha and two beta subunits. Mg(2+) serves as cofactor.

It carries out the reaction succinate + ATP + CoA = succinyl-CoA + ADP + phosphate. The enzyme catalyses GTP + succinate + CoA = succinyl-CoA + GDP + phosphate. It participates in carbohydrate metabolism; tricarboxylic acid cycle; succinate from succinyl-CoA (ligase route): step 1/1. Its function is as follows. Succinyl-CoA synthetase functions in the citric acid cycle (TCA), coupling the hydrolysis of succinyl-CoA to the synthesis of either ATP or GTP and thus represents the only step of substrate-level phosphorylation in the TCA. The beta subunit provides nucleotide specificity of the enzyme and binds the substrate succinate, while the binding sites for coenzyme A and phosphate are found in the alpha subunit. The sequence is that of Succinate--CoA ligase [ADP-forming] subunit beta from Idiomarina loihiensis (strain ATCC BAA-735 / DSM 15497 / L2-TR).